The sequence spans 181 residues: Early E3 20.3 kDa glycoprotein (181 aa).

4 N-linked (GlcNAc...) asparagine; by host glycosylation sites follow: N29, N57, N70, and N75.

It belongs to the adenoviridae E3_20 family.

E3 proteins seem to be dispensable for virus growth in tissue culture cells. They are potentially important for virus growth under special conditions; E3 region may help adenoviruses to evade the immune surveillance of the host. The polypeptide is Early E3 20.3 kDa glycoprotein (Human adenovirus B serotype 11 (strain Slobiski) (HAdV-11)).